Reading from the N-terminus, the 131-residue chain is Glycine cleavage system H protein (131 aa).

The 83-residue stretch at 24–106 (RVTVGISDHA…YGEGWIFVVE (83 aa)) folds into the Lipoyl-binding domain. Lys65 is modified (N6-lipoyllysine).

This sequence belongs to the GcvH family. As to quaternary structure, the glycine cleavage system is composed of four proteins: P, T, L and H. Requires (R)-lipoate as cofactor.

In terms of biological role, the glycine cleavage system catalyzes the degradation of glycine. The H protein shuttles the methylamine group of glycine from the P protein to the T protein. The sequence is that of Glycine cleavage system H protein from Xanthomonas axonopodis pv. citri (strain 306).